The following is a 459-amino-acid chain: Putrescine aminotransferase (459 aa).

Pyridoxal 5'-phosphate-binding positions include 150 to 151 (GT) and Q274. K300 bears the N6-(pyridoxal phosphate)lysine mark. T332 contacts pyridoxal 5'-phosphate.

It belongs to the class-III pyridoxal-phosphate-dependent aminotransferase family. Putrescine aminotransferase subfamily. The cofactor is pyridoxal 5'-phosphate.

It carries out the reaction an alkane-alpha,omega-diamine + 2-oxoglutarate = an omega-aminoaldehyde + L-glutamate. The enzyme catalyses putrescine + 2-oxoglutarate = 1-pyrroline + L-glutamate + H2O. It catalyses the reaction cadaverine + 2-oxoglutarate = 5-aminopentanal + L-glutamate. Its pathway is amine and polyamine degradation; putrescine degradation; 4-aminobutanal from putrescine (transaminase route): step 1/1. Its function is as follows. Catalyzes the aminotransferase reaction from putrescine to 2-oxoglutarate, leading to glutamate and 4-aminobutanal, which spontaneously cyclizes to form 1-pyrroline. This is the first step in one of two pathways for putrescine degradation, where putrescine is converted into 4-aminobutanoate (gamma-aminobutyrate or GABA) via 4-aminobutanal. Also functions as a cadaverine transaminase in a a L-lysine degradation pathway to succinate that proceeds via cadaverine, glutarate and L-2-hydroxyglutarate. This is Putrescine aminotransferase from Escherichia coli O8 (strain IAI1).